The following is a 914-amino-acid chain: Alanine--tRNA ligase (914 aa).

Zn(2+) contacts are provided by His613, His617, Cys717, and His721.

This sequence belongs to the class-II aminoacyl-tRNA synthetase family. Requires Zn(2+) as cofactor.

Its subcellular location is the cytoplasm. The catalysed reaction is tRNA(Ala) + L-alanine + ATP = L-alanyl-tRNA(Ala) + AMP + diphosphate. Catalyzes the attachment of alanine to tRNA(Ala) in a two-step reaction: alanine is first activated by ATP to form Ala-AMP and then transferred to the acceptor end of tRNA(Ala). Also edits incorrectly charged Ser-tRNA(Ala) and Gly-tRNA(Ala) via its editing domain. The protein is Alanine--tRNA ligase of Pyrococcus furiosus (strain ATCC 43587 / DSM 3638 / JCM 8422 / Vc1).